The chain runs to 525 residues: Coronin-2A (525 aa).

WD repeat units lie at residues G80–N120, G130–M170, C178–E217, Y220–T263, and G269–N308. Positions Q485 to R524 form a coiled coil.

The protein belongs to the WD repeat coronin family. Binds actin. Component of the N-Cor repressor complex, at least composed of NCOR1, NCOR2, HDAC3, TBL1X, TBL1R, CORO2A and GPS2.

In Bos taurus (Bovine), this protein is Coronin-2A (CORO2A).